We begin with the raw amino-acid sequence, 163 residues long: Campylobacter invasion antigen D (163 aa).

The short motif at Lys-135–Leu-145 is the MKD element.

In terms of assembly, interacts with the host cell protein IQGAP1, thus displacing RACGAP1 from the IQGAP1 complex.

Its subcellular location is the secreted. The protein localises to the host cytoplasm. It is found in the host cytosol. In terms of biological role, effector protein required for the development of acute disease and colon inflammatory lesions. Required for maximal host cell invasion and maximal secretion of the inflammatory chemokine interleukin-8 (IL-8) from host cells. Acts by activating the host MAP kinase signaling pathways ERK-1/2 and p38 to promote both cellular invasion and the release of IL-8. CiaD mediated activation of ERK-1/2 leads to the phosphorylation of host cortactin (CTTN) on serine residues and association of cortactin with N-WASP, promoting actin cytoskeleton rearrangement, membrane ruffling and host cell invasion. In addition, maximal host cell invasion requires interaction with the host cell protein IQGAP1, a Ras GTPase-activating-like protein. Binding to IQGAP1 facilitates the activation of the Rho GTPases RAC1 and CDC42, further promoting actin reorganization and bacterial uptake. CiaD promotes RAC1 activation by excluding RACGAP1 from the IQGAP1 complex, preventing the deactivation of RAC1. CiaD probably activates ERK signaling upstream or independently of IQGAP1. In Campylobacter jejuni subsp. jejuni serotype O:2 (strain ATCC 700819 / NCTC 11168), this protein is Campylobacter invasion antigen D.